The sequence spans 5641 residues: Cyclochlorotine synthetase (5641 aa).

The tract at residues 95–124 (PENLNGHLIGSTNGHKKQWENDSADDKRGQ) is disordered. A compositionally biased stretch (basic and acidic residues) spans 111–124 (KQWENDSADDKRGQ). The interval 217–622 (FTENVQRYPT…GRRDTQVKIR (406 aa)) is adenylation (A) domain 1. Residues 816 to 892 (TEEEYKIQTL…DLVSNCKMSA (77 aa)) enclose the Carrier 1 domain. The interval 821–889 (KIQTLKEIWS…QLSDLVSNCK (69 aa)) is thiolation (T) domain 1. O-(pantetheine 4'-phosphoryl)serine is present on S853. The tract at residues 926-1333 (EDVYPCTPLQ…AHVAEQIGQP (408 aa)) is condensation (C) domain 1. Residues 1390–1768 (DGNLTFEELN…ISRATTQIKI (379 aa)) form an adenylation (A) domain 2 region. A Carrier 2 domain is found at 1902 to 1978 (IELSEKQENM…QLVMIATELT (77 aa)). The segment at 1907–1975 (KQENMARLWA…RFDQLVMIAT (69 aa)) is thiolation (T) domain 2. The residue at position 1939 (S1939) is an O-(pantetheine 4'-phosphoryl)serine. Positions 2022–2438 (DIYACTPFQE…DLASEQDLAK (417 aa)) are condensation (C) domain 2. The interval 2459–2859 (AEKARQHPNK…GRADTQVKLR (401 aa)) is adenylation (A) domain 3. A Carrier 3 domain is found at 2976–3052 (GPLTEMETTL…GMAIKIQPIH (77 aa)). Residues 2977-3049 (PLTEMETTLA…NLAGMAIKIQ (73 aa)) are thiolation (T) domain 3. Position 3013 is an O-(pantetheine 4'-phosphoryl)serine (S3013). A condensation (C) domain 3 region spans residues 3089-3482 (DIYPCTPLQV…LETVLSAFST (394 aa)). The tract at residues 3523-3873 (VQRAPDKVAI…IARKDLQVKL (351 aa)) is adenylation (A) domain 4. The Carrier 4 domain maps to 4005–4081 (IPSTPTEMKM…ELATKIAPRI (77 aa)). Residues 4010–4078 (TEMKMQQLWA…RLSELATKIA (69 aa)) form a thiolation (T) domain 4 region. S4042 is modified (O-(pantetheine 4'-phosphoryl)serine). The segment at 4123–4549 (KDVYPCTPLQ…QSLDSLSQQD (427 aa)) is condensation (C) domain 4. The adenylation (A) domain 5 stretch occupies residues 4574-4982 (QEIAGRHPDA…GRIGTDIKLR (409 aa)). The Carrier 5 domain maps to 5118 to 5194 (PPSTQEEKVI…SLAEKISWES (77 aa)). The interval 5123-5191 (EEKVIAALWA…KLASLAEKIS (69 aa)) is thiolation (T) domain 5. Residue S5155 is modified to O-(pantetheine 4'-phosphoryl)serine. Positions 5260 to 5556 (AYLDIGPDVQ…DKCTTCVSGS (297 aa)) are condensation (C) domain 5.

It belongs to the NRP synthetase family.

It functions in the pathway mycotoxin biosynthesis. Nonribosomal peptide synthetase; part of the gene cluster that mediates the biosynthesis of the mycotoxin cyclochlorotine, a hepatotoxic and carcinogenic cyclic chlorinated pentapeptide. Within the pathway, The NRPS cctN initially catalyzes the condensation of L-serine (Ser), Pro, L-2-aminobutyrate (2Abu), Ser, and beta-Phe in this order. During the chain elongation, side-chain hydroxy group of Ser4 would be used as a nucleophile, giving isocyclotine as a product of terminal condensation-like (CT) domain-catalyzed cyclization. After the dichlorination of Pro2 catalyzed by cctP2 to produce isocyclochlorotine, the cctO-mediated transacylation of isocyclochlorotine can furnish cyclochlorotine. The subsequent hydroxylation of cyclochlorotine by cctR yields hydroxycyclochlorotine as the final product. CctP1 probably acts as a phenylalanine aminomutase and provides the uncommon building block beta-Phe. Furthermore, 2Abu can be synthesized from threonine by one of the threonine dehydratases and transaminases localized outside of the cluster. The functions of the remaining proteins encoded by the cluster, cctM and cctT, have not been identified yet. In Talaromyces islandicus (Penicillium islandicum), this protein is Cyclochlorotine synthetase.